The primary structure comprises 536 residues: Phosphoenolpyruvate carboxykinase (ATP) (536 aa).

The substrate site is built by arginine 61, tyrosine 195, and lysine 201. ATP is bound by residues lysine 201, histidine 220, and 236–244 (GLSGTGKTT). Mn(2+)-binding residues include lysine 201 and histidine 220. Aspartate 257 serves as a coordination point for Mn(2+). Positions 285, 322, and 447 each coordinate ATP. Arginine 322 is a substrate binding site.

Belongs to the phosphoenolpyruvate carboxykinase (ATP) family. Requires Mn(2+) as cofactor.

Its subcellular location is the cytoplasm. It catalyses the reaction oxaloacetate + ATP = phosphoenolpyruvate + ADP + CO2. Its pathway is carbohydrate biosynthesis; gluconeogenesis. Its function is as follows. Involved in the gluconeogenesis. Catalyzes the conversion of oxaloacetate (OAA) to phosphoenolpyruvate (PEP) through direct phosphoryl transfer between the nucleoside triphosphate and OAA. This is Phosphoenolpyruvate carboxykinase (ATP) from Rhizobium rhizogenes (strain K84 / ATCC BAA-868) (Agrobacterium radiobacter).